A 393-amino-acid polypeptide reads, in one-letter code: Phosphoglycerate kinase (393 aa).

Substrate-binding positions include 22–24, arginine 37, 60–63, arginine 119, and arginine 152; these read DFN and HLGR. ATP is bound by residues lysine 202, glycine 293, glutamate 324, and 350-353; that span reads GGDS.

The protein belongs to the phosphoglycerate kinase family. In terms of assembly, monomer.

The protein localises to the cytoplasm. The enzyme catalyses (2R)-3-phosphoglycerate + ATP = (2R)-3-phospho-glyceroyl phosphate + ADP. Its pathway is carbohydrate degradation; glycolysis; pyruvate from D-glyceraldehyde 3-phosphate: step 2/5. The polypeptide is Phosphoglycerate kinase (Borreliella burgdorferi (strain ZS7) (Borrelia burgdorferi)).